The following is a 61-amino-acid chain: Small ribosomal subunit protein uS14 (61 aa).

Residues Cys-24, Cys-27, Cys-40, and Cys-43 each coordinate Zn(2+).

It belongs to the universal ribosomal protein uS14 family. Zinc-binding uS14 subfamily. As to quaternary structure, part of the 30S ribosomal subunit. Contacts proteins S3 and S10. Zn(2+) serves as cofactor.

Functionally, binds 16S rRNA, required for the assembly of 30S particles and may also be responsible for determining the conformation of the 16S rRNA at the A site. In Campylobacter lari (strain RM2100 / D67 / ATCC BAA-1060), this protein is Small ribosomal subunit protein uS14.